The sequence spans 575 residues: Regulatory protein zeste (575 aa).

Residues 1 to 26 show a composition bias toward gly residues; sequence MSAQGEGGGAGGSGGGGAGSDGGGNA. Disordered stretches follow at residues 1–53 and 151–174; these read MSAQ…LPLT and SVASAVPQQQQQQHHQQHDSVKVE. Positions 2 to 47 are hydrophobic; sequence SAQGEGGGAGGSGGGGAGSDGGGNAGQSSTGSGTVAVTNGGNSSAK. Residues 31-51 show a composition bias toward polar residues; the sequence is TGSGTVAVTNGGNSSAKNQLP. Residues 48-128 mediate DNA binding; it reads NQLPLTPRFT…WLNSRLRKQY (81 aa). A compositionally biased stretch (low complexity) spans 151 to 164; that stretch reads SVASAVPQQQQQQH.

Self-associates forming complexes of several hundred monomers.

It is found in the nucleus. Its function is as follows. Involved in transvection phenomena (= synapsis-dependent gene expression), where the synaptic pairing of chromosomes carrying genes with which zeste interacts influences the expression of these genes. Zeste binds to DNA and stimulates transcription from a nearby promoter. The chain is Regulatory protein zeste (z) from Drosophila melanogaster (Fruit fly).